Consider the following 1451-residue polypeptide: DNA excision repair protein ERCC-6-like (1451 aa).

One copy of the TPR 1 repeat lies at 27 to 60; it reads YDRYRQKGKEAALNGELPRALELFQLAYQLQPSE. The region spanning 118-286 is the Helicase ATP-binding domain; it reads SLYRDGRKGG…WALFDFACQG (169 aa). 131 to 138 is a binding site for ATP; that stretch reads DDMGLGKT. The DEAH box signature appears at 237 to 240; the sequence is DEAH. A Helicase C-terminal domain is found at 479 to 639; that stretch reads FVVSLMECLR…PFRYFSKQEL (161 aa). Disordered regions lie at residues 647–669, 778–804, 935–1006, 1035–1054, 1063–1083, 1096–1140, and 1182–1343; these read DTRS…RSDT, NSFD…ETAS, DDTS…ATTD, DEEV…EFQL, LEEP…NYND, RSTP…LTSS, and LLEN…SAEL. The segment covering 781–804 has biased composition (acidic residues); sequence DEPEFEEDEQNLPSAEDAEMETAS. Composition is skewed to polar residues over residues 944–964 and 992–1002; these read SDFN…SPSL and QVLSSPLSQHE. The residue at position 961 (Ser-961) is a Phosphoserine. Residues 1035-1050 show a composition bias toward acidic residues; that stretch reads DEEVHEVEESAAEESP. Residues 1063-1074 show a composition bias toward basic and acidic residues; that stretch reads LEEPSINHDKQN. Residues 1121–1132 show a composition bias toward acidic residues; that stretch reads DTEEEEEEEEES. The span at 1213–1230 shows a compositional bias: polar residues; the sequence is VQTSSGDNSKSYETSEAN. Positions 1244 to 1278 are enriched in basic and acidic residues; it reads YREGKNTSDKVSESNETHSEEFAEEEKPSGDKSES. The span at 1310–1341 shows a compositional bias: acidic residues; that stretch reads SEADESVVEEEEPSGETLNTEESEMGEEEESA. Residues 1402–1435 form a TPR 2 repeat; it reads YNLLVLSGKQSLAEGRKQEALDFFLKAIDINTGD.

This sequence belongs to the SNF2/RAD54 helicase family.

It localises to the chromosome. Its subcellular location is the centromere. The protein resides in the kinetochore. The catalysed reaction is ATP + H2O = ADP + phosphate + H(+). DNA helicase that acts as a tension sensor that associates with catenated DNA which is stretched under tension until it is resolved during anaphase. Functions as ATP-dependent DNA translocase. Can promote Holliday junction branch migration (in vitro). In Danio rerio (Zebrafish), this protein is DNA excision repair protein ERCC-6-like (ercc6l).